The primary structure comprises 429 residues: tRNA modification GTPase MnmE (429 aa).

Residues Arg-20, Glu-77, and Arg-117 each contribute to the (6S)-5-formyl-5,6,7,8-tetrahydrofolate site. The region spanning 213–353 (GFEVAILGAP…LVKAVSHRLS (141 aa)) is the TrmE-type G domain. Asn-223 lines the K(+) pocket. Residues 223–228 (NVGKSS), 242–248 (SSIAGTT), and 267–270 (DTAG) contribute to the GTP site. Ser-227 contributes to the Mg(2+) binding site. K(+)-binding residues include Ser-242, Ile-244, and Thr-247. Thr-248 contacts Mg(2+). Lys-429 contributes to the (6S)-5-formyl-5,6,7,8-tetrahydrofolate binding site.

The protein belongs to the TRAFAC class TrmE-Era-EngA-EngB-Septin-like GTPase superfamily. TrmE GTPase family. Homodimer. Heterotetramer of two MnmE and two MnmG subunits. Requires K(+) as cofactor.

Its subcellular location is the cytoplasm. Its function is as follows. Exhibits a very high intrinsic GTPase hydrolysis rate. Involved in the addition of a carboxymethylaminomethyl (cmnm) group at the wobble position (U34) of certain tRNAs, forming tRNA-cmnm(5)s(2)U34. This is tRNA modification GTPase MnmE from Dinoroseobacter shibae (strain DSM 16493 / NCIMB 14021 / DFL 12).